The sequence spans 310 residues: Aspartate carbamoyltransferase catalytic subunit (310 aa).

Carbamoyl phosphate is bound by residues arginine 57 and threonine 58. Position 86 (lysine 86) interacts with L-aspartate. The carbamoyl phosphate site is built by arginine 107, histidine 135, and glutamine 138. L-aspartate is bound by residues arginine 168 and arginine 229. Carbamoyl phosphate is bound by residues leucine 268 and proline 269.

Belongs to the aspartate/ornithine carbamoyltransferase superfamily. ATCase family. As to quaternary structure, heterooligomer of catalytic and regulatory chains.

It catalyses the reaction carbamoyl phosphate + L-aspartate = N-carbamoyl-L-aspartate + phosphate + H(+). Its pathway is pyrimidine metabolism; UMP biosynthesis via de novo pathway; (S)-dihydroorotate from bicarbonate: step 2/3. Its function is as follows. Catalyzes the condensation of carbamoyl phosphate and aspartate to form carbamoyl aspartate and inorganic phosphate, the committed step in the de novo pyrimidine nucleotide biosynthesis pathway. The chain is Aspartate carbamoyltransferase catalytic subunit from Thermococcus kodakarensis (strain ATCC BAA-918 / JCM 12380 / KOD1) (Pyrococcus kodakaraensis (strain KOD1)).